The sequence spans 543 residues: Glutamyl-tRNA(Gln) amidotransferase subunit A, chloroplastic/mitochondrial (543 aa).

Residues lysine 123 and serine 198 each act as charge relay system in the active site. Serine 222 acts as the Acyl-ester intermediate in catalysis.

The protein belongs to the amidase family. GatA subfamily. In terms of assembly, subunit of the heterotrimeric GatCAB amidotransferase (AdT) complex, composed of A, B and C subunits.

The protein resides in the mitochondrion. It localises to the plastid. Its subcellular location is the chloroplast stroma. It carries out the reaction L-glutamyl-tRNA(Gln) + L-glutamine + ATP + H2O = L-glutaminyl-tRNA(Gln) + L-glutamate + ADP + phosphate + H(+). Its function is as follows. Allows the formation of correctly charged Gln-tRNA(Gln) through the transamidation of misacylated Glu-tRNA(Gln) in chloroplasts and mitochondria. The reaction takes place in the presence of glutamine and ATP through an activated gamma-phospho-Glu-tRNA(Gln). This chain is Glutamyl-tRNA(Gln) amidotransferase subunit A, chloroplastic/mitochondrial, found in Oryza sativa subsp. japonica (Rice).